The sequence spans 207 residues: Large ribosomal subunit protein uL4 (207 aa).

The tract at residues 50 to 76 (AVKNRSAVSGGGRKPWKQKGTGRARQG) is disordered.

Belongs to the universal ribosomal protein uL4 family. Part of the 50S ribosomal subunit.

Functionally, one of the primary rRNA binding proteins, this protein initially binds near the 5'-end of the 23S rRNA. It is important during the early stages of 50S assembly. It makes multiple contacts with different domains of the 23S rRNA in the assembled 50S subunit and ribosome. In terms of biological role, forms part of the polypeptide exit tunnel. This is Large ribosomal subunit protein uL4 from Staphylococcus aureus (strain JH9).